A 68-amino-acid polypeptide reads, in one-letter code: Small proline-rich protein 2K (68 aa).

The 1; truncated repeat unit spans residues 21-26 (PKPCSP). Positions 21 to 65 (PKPCSPPKCPEPCPPPKCPETCPPQPCQRKCPPVLEAPCQQKCPS) are 3.5 X 9 AA approximate tandem repeats. Tandem repeats lie at residues 27 to 35 (PKCPEPCPP), 36 to 44 (PKCPETCPP), and 45 to 53 (QPCQRKCPP).

The protein belongs to the cornifin (SPRR) family. In terms of tissue distribution, not expressed in uterus.

The protein localises to the cytoplasm. Cross-linked envelope protein of keratinocytes. It is a keratinocyte protein that first appears in the cell cytosol, but ultimately becomes cross-linked to membrane proteins by transglutaminase. All that results in the formation of an insoluble envelope beneath the plasma membrane. In Mus musculus (Mouse), this protein is Small proline-rich protein 2K (Sprr2k).